Reading from the N-terminus, the 122-residue chain is uncharacterized protein (122 aa).

The segment covering 1-15 (MAEPGGRGDYHKDGR) has biased composition (basic and acidic residues). The segment at 1-26 (MAEPGGRGDYHKDGRPPSLSRSPLFT) is disordered.

This is an uncharacterized protein from Macaca fascicularis (Crab-eating macaque).